The sequence spans 287 residues: Elongation factor Ts (287 aa).

The tract at residues threonine 79–valine 82 is involved in Mg(2+) ion dislocation from EF-Tu.

Belongs to the EF-Ts family.

It localises to the cytoplasm. In terms of biological role, associates with the EF-Tu.GDP complex and induces the exchange of GDP to GTP. It remains bound to the aminoacyl-tRNA.EF-Tu.GTP complex up to the GTP hydrolysis stage on the ribosome. This Anaplasma phagocytophilum (strain HZ) protein is Elongation factor Ts.